Consider the following 179-residue polypeptide: Large ribosomal subunit protein uL5 (179 aa).

Belongs to the universal ribosomal protein uL5 family. As to quaternary structure, part of the 50S ribosomal subunit; part of the 5S rRNA/L5/L18/L25 subcomplex. Contacts the 5S rRNA and the P site tRNA. Forms a bridge to the 30S subunit in the 70S ribosome.

This is one of the proteins that bind and probably mediate the attachment of the 5S RNA into the large ribosomal subunit, where it forms part of the central protuberance. In the 70S ribosome it contacts protein S13 of the 30S subunit (bridge B1b), connecting the 2 subunits; this bridge is implicated in subunit movement. Contacts the P site tRNA; the 5S rRNA and some of its associated proteins might help stabilize positioning of ribosome-bound tRNAs. The chain is Large ribosomal subunit protein uL5 from Xylella fastidiosa (strain M12).